Here is a 227-residue protein sequence, read N- to C-terminus: Glutathione S-transferase U18 (227 aa).

In terms of domain architecture, GST N-terminal spans 4-83 (EDVKLIGSWA…YIDEAWNSSG (80 aa)). Glutathione-binding positions include 14–15 (SV), 40–41 (SK), 54–55 (KM), and 67–68 (ES). The GST C-terminal domain occupies 90 to 221 (HPYDRAIARF…TKLAEFARKL (132 aa)).

It belongs to the GST superfamily. Tau family.

The protein resides in the cytoplasm. It localises to the cytosol. It carries out the reaction RX + glutathione = an S-substituted glutathione + a halide anion + H(+). In terms of biological role, may be involved in the conjugation of reduced glutathione to a wide number of exogenous and endogenous hydrophobic electrophiles and have a detoxification role against certain herbicides. This is Glutathione S-transferase U18 (GSTU18) from Arabidopsis thaliana (Mouse-ear cress).